Reading from the N-terminus, the 318-residue chain is Ribose-phosphate pyrophosphokinase 2 (318 aa).

96–101 contributes to the ATP binding site; the sequence is RQDKKD. The Mg(2+) site is built by D128, H130, D139, and D143. H130 provides a ligand contact to ATP. Positions 212–227 are binding of phosphoribosylpyrophosphate; that stretch reads KDRVAILVDDMADTCG.

This sequence belongs to the ribose-phosphate pyrophosphokinase family. As to quaternary structure, homodimer. The active form is probably a hexamer composed of 3 homodimers. Mg(2+) serves as cofactor.

The enzyme catalyses D-ribose 5-phosphate + ATP = 5-phospho-alpha-D-ribose 1-diphosphate + AMP + H(+). It participates in metabolic intermediate biosynthesis; 5-phospho-alpha-D-ribose 1-diphosphate biosynthesis; 5-phospho-alpha-D-ribose 1-diphosphate from D-ribose 5-phosphate (route I): step 1/1. Its activity is regulated as follows. Activated by magnesium and inorganic phosphate. Competitively or non-competitively inhibited by ADP, 2,3-bisphosphoglyceride or GDP. Its function is as follows. Catalyzes the synthesis of phosphoribosylpyrophosphate (PRPP) that is essential for nucleotide synthesis. This Homo sapiens (Human) protein is Ribose-phosphate pyrophosphokinase 2 (PRPS2).